The chain runs to 305 residues: Homoserine O-acetyltransferase (305 aa).

The Acyl-thioester intermediate role is filled by Cys-142. The substrate site is built by Lys-163 and Ser-192. Residue His-235 is the Proton acceptor of the active site. Glu-237 is an active-site residue. A substrate-binding site is contributed by Arg-249.

This sequence belongs to the MetA family.

The protein localises to the cytoplasm. The catalysed reaction is L-homoserine + acetyl-CoA = O-acetyl-L-homoserine + CoA. Its pathway is amino-acid biosynthesis; L-methionine biosynthesis via de novo pathway; O-acetyl-L-homoserine from L-homoserine: step 1/1. Its function is as follows. Transfers an acetyl group from acetyl-CoA to L-homoserine, forming acetyl-L-homoserine. This Phocaeicola vulgatus (strain ATCC 8482 / DSM 1447 / JCM 5826 / CCUG 4940 / NBRC 14291 / NCTC 11154) (Bacteroides vulgatus) protein is Homoserine O-acetyltransferase.